We begin with the raw amino-acid sequence, 145 residues long: Large ribosomal subunit protein uL15 (145 aa).

Residues Met-1–Gly-13 show a composition bias toward basic residues. A disordered region spans residues Met-1 to Trp-44.

It belongs to the universal ribosomal protein uL15 family. As to quaternary structure, part of the 50S ribosomal subunit.

In terms of biological role, binds to the 23S rRNA. The chain is Large ribosomal subunit protein uL15 from Methanobrevibacter smithii (strain ATCC 35061 / DSM 861 / OCM 144 / PS).